We begin with the raw amino-acid sequence, 572 residues long: Urease subunit alpha (572 aa).

Positions 136–572 (GGIDTHIHFI…VPLGQRYFLF (437 aa)) constitute a Urease domain. Ni(2+)-binding residues include His-141, His-143, and Lys-224. N6-carboxylysine is present on Lys-224. His-226 provides a ligand contact to substrate. The Ni(2+) site is built by His-253 and His-279. The Proton donor role is filled by His-327. Position 367 (Asp-367) interacts with Ni(2+).

The protein belongs to the metallo-dependent hydrolases superfamily. Urease alpha subunit family. As to quaternary structure, heterotrimer of UreA (gamma), UreB (beta) and UreC (alpha) subunits. Three heterotrimers associate to form the active enzyme. The cofactor is Ni cation. In terms of processing, carboxylation allows a single lysine to coordinate two nickel ions.

It is found in the cytoplasm. The catalysed reaction is urea + 2 H2O + H(+) = hydrogencarbonate + 2 NH4(+). Its pathway is nitrogen metabolism; urea degradation; CO(2) and NH(3) from urea (urease route): step 1/1. The protein is Urease subunit alpha of Haemophilus influenzae (strain PittGG).